The sequence spans 21 residues: Serine protease inhibitor 1 (21 aa).

A Pacifastin domain is found at 1 to 21 (EQQCTPGQTKKEDCNNCTSGD). Positions 1–21 (EQQCTPGQTKKEDCNNCTSGD) are disordered.

The protein belongs to the protease inhibitor I19 family. Expressed in hemolymph.

It localises to the secreted. Probable serine protease inhibitor. This is Serine protease inhibitor 1 from Melanoplus sanguinipes (Migratory grasshopper).